Consider the following 411-residue polypeptide: Multifunctional CCA protein (411 aa).

Positions 8 and 11 each coordinate ATP. Positions 8 and 11 each coordinate CTP. 2 residues coordinate Mg(2+): aspartate 21 and aspartate 23. ATP contacts are provided by arginine 91, arginine 137, and arginine 140. Residues arginine 91, arginine 137, and arginine 140 each coordinate CTP. The HD domain maps to 228 to 333 (SGVHTLLVIE…LKVFNALDIW (106 aa)).

Belongs to the tRNA nucleotidyltransferase/poly(A) polymerase family. Bacterial CCA-adding enzyme type 1 subfamily. As to quaternary structure, monomer. Can also form homodimers and oligomers. The cofactor is Mg(2+). It depends on Ni(2+) as a cofactor.

The catalysed reaction is a tRNA precursor + 2 CTP + ATP = a tRNA with a 3' CCA end + 3 diphosphate. The enzyme catalyses a tRNA with a 3' CCA end + 2 CTP + ATP = a tRNA with a 3' CCACCA end + 3 diphosphate. In terms of biological role, catalyzes the addition and repair of the essential 3'-terminal CCA sequence in tRNAs without using a nucleic acid template. Adds these three nucleotides in the order of C, C, and A to the tRNA nucleotide-73, using CTP and ATP as substrates and producing inorganic pyrophosphate. tRNA 3'-terminal CCA addition is required both for tRNA processing and repair. Also involved in tRNA surveillance by mediating tandem CCA addition to generate a CCACCA at the 3' terminus of unstable tRNAs. While stable tRNAs receive only 3'-terminal CCA, unstable tRNAs are marked with CCACCA and rapidly degraded. The polypeptide is Multifunctional CCA protein (Actinobacillus pleuropneumoniae serotype 5b (strain L20)).